The sequence spans 59 residues: Conotoxin Sr5.4 (59 aa).

The first 22 residues, 1–22, serve as a signal peptide directing secretion; the sequence is MRCLPVFVILLLLIASAPSVDA. A propeptide spanning residues 23–44 is cleaved from the precursor; it reads QLKTKDDVPLASFHDNAKGTQH.

Belongs to the conotoxin T superfamily. In terms of processing, contains 2 disulfide bonds that can be either 'C1-C3, C2-C4' or 'C1-C4, C2-C3', since these disulfide connectivities have been observed for conotoxins with cysteine framework V (for examples, see AC P0DQQ7 and AC P81755). As to expression, expressed by the venom duct.

The protein resides in the secreted. The sequence is that of Conotoxin Sr5.4 from Conus spurius (Alphabet cone).